A 208-amino-acid polypeptide reads, in one-letter code: Small ribosomal subunit protein eS8 (208 aa).

The segment at 1-27 is disordered; it reads MGISRDNWHKRRKTGGKRKPYHKKRKY. Gly2 carries the N-myristoyl glycine lipid modification. The segment covering 8-26 has biased composition (basic residues); the sequence is WHKRRKTGGKRKPYHKKRK. N6-acetyllysine occurs at positions 37 and 128. Thr130 carries the post-translational modification Phosphothreonine. A Phosphoserine modification is found at Ser160. Glycyl lysine isopeptide (Lys-Gly) (interchain with G-Cter in SUMO2) cross-links involve residues Lys170 and Lys193.

Belongs to the eukaryotic ribosomal protein eS8 family. As to quaternary structure, component of the small ribosomal subunit. Identified in a IGF2BP1-dependent mRNP granule complex containing untranslated mRNAs. Part of the small subunit (SSU) processome, composed of more than 70 proteins and the RNA chaperone small nucleolar RNA (snoRNA) U3.

It is found in the cytoplasm. It localises to the membrane. Its subcellular location is the nucleus. The protein localises to the nucleolus. In terms of biological role, component of the small ribosomal subunit. The ribosome is a large ribonucleoprotein complex responsible for the synthesis of proteins in the cell. Part of the small subunit (SSU) processome, first precursor of the small eukaryotic ribosomal subunit. During the assembly of the SSU processome in the nucleolus, many ribosome biogenesis factors, an RNA chaperone and ribosomal proteins associate with the nascent pre-rRNA and work in concert to generate RNA folding, modifications, rearrangements and cleavage as well as targeted degradation of pre-ribosomal RNA by the RNA exosome. The protein is Small ribosomal subunit protein eS8 (Rps8) of Mus musculus (Mouse).